The chain runs to 344 residues: N-acetyl-gamma-glutamyl-phosphate reductase (344 aa).

C149 is an active-site residue.

The protein belongs to the NAGSA dehydrogenase family. Type 1 subfamily.

It is found in the cytoplasm. It carries out the reaction N-acetyl-L-glutamate 5-semialdehyde + phosphate + NADP(+) = N-acetyl-L-glutamyl 5-phosphate + NADPH + H(+). It participates in amino-acid biosynthesis; L-arginine biosynthesis; N(2)-acetyl-L-ornithine from L-glutamate: step 3/4. In terms of biological role, catalyzes the NADPH-dependent reduction of N-acetyl-5-glutamyl phosphate to yield N-acetyl-L-glutamate 5-semialdehyde. The chain is N-acetyl-gamma-glutamyl-phosphate reductase from Thermoanaerobacter pseudethanolicus (strain ATCC 33223 / 39E) (Clostridium thermohydrosulfuricum).